Consider the following 326-residue polypeptide: Tetraacyldisaccharide 4'-kinase (326 aa).

ATP is bound at residue 55-62 (TAGGNGKT).

Belongs to the LpxK family.

It carries out the reaction a lipid A disaccharide + ATP = a lipid IVA + ADP + H(+). It participates in glycolipid biosynthesis; lipid IV(A) biosynthesis; lipid IV(A) from (3R)-3-hydroxytetradecanoyl-[acyl-carrier-protein] and UDP-N-acetyl-alpha-D-glucosamine: step 6/6. Functionally, transfers the gamma-phosphate of ATP to the 4'-position of a tetraacyldisaccharide 1-phosphate intermediate (termed DS-1-P) to form tetraacyldisaccharide 1,4'-bis-phosphate (lipid IVA). The sequence is that of Tetraacyldisaccharide 4'-kinase from Erwinia tasmaniensis (strain DSM 17950 / CFBP 7177 / CIP 109463 / NCPPB 4357 / Et1/99).